Here is a 506-residue protein sequence, read N- to C-terminus: Maturase K (506 aa).

The protein belongs to the intron maturase 2 family. MatK subfamily.

It localises to the plastid. The protein resides in the chloroplast. Usually encoded in the trnK tRNA gene intron. Probably assists in splicing its own and other chloroplast group II introns. The polypeptide is Maturase K (Lathyrus sativus (White vetchling)).